Here is a 507-residue protein sequence, read N- to C-terminus: Glycerol kinase (507 aa).

T14 serves as a coordination point for ADP. T14, T15, and S16 together coordinate ATP. T14 serves as a coordination point for sn-glycerol 3-phosphate. Residue R18 coordinates ADP. Sn-glycerol 3-phosphate contacts are provided by R84, E85, Y136, and D246. The glycerol site is built by R84, E85, Y136, D246, and Q247. ADP is bound by residues T268 and G311. ATP is bound by residues T268, G311, Q315, and G412. The ADP site is built by G412 and N416.

Belongs to the FGGY kinase family.

The catalysed reaction is glycerol + ATP = sn-glycerol 3-phosphate + ADP + H(+). Its pathway is polyol metabolism; glycerol degradation via glycerol kinase pathway; sn-glycerol 3-phosphate from glycerol: step 1/1. Inhibited by fructose 1,6-bisphosphate (FBP). Functionally, key enzyme in the regulation of glycerol uptake and metabolism. Catalyzes the phosphorylation of glycerol to yield sn-glycerol 3-phosphate. This Vibrio atlanticus (strain LGP32) (Vibrio splendidus (strain Mel32)) protein is Glycerol kinase.